The sequence spans 348 residues: Protein RecA (348 aa).

Position 66–73 (66–73) interacts with ATP; the sequence is GPESSGKT.

Belongs to the RecA family.

Its subcellular location is the cytoplasm. Can catalyze the hydrolysis of ATP in the presence of single-stranded DNA, the ATP-dependent uptake of single-stranded DNA by duplex DNA, and the ATP-dependent hybridization of homologous single-stranded DNAs. It interacts with LexA causing its activation and leading to its autocatalytic cleavage. The polypeptide is Protein RecA (Neisseria meningitidis serogroup C / serotype 2a (strain ATCC 700532 / DSM 15464 / FAM18)).